A 158-amino-acid polypeptide reads, in one-letter code: 2-C-methyl-D-erythritol 2,4-cyclodiphosphate synthase (158 aa).

A divalent metal cation contacts are provided by Asp8 and His10. Residues 8-10 (DVH) and 34-35 (HS) each bind 4-CDP-2-C-methyl-D-erythritol 2-phosphate. His42 lines the a divalent metal cation pocket. Residues 56–58 (DIG), 61–65 (FPDTD), 100–106 (AQVPKMA), 132–135 (TTTE), Phe139, and Arg142 contribute to the 4-CDP-2-C-methyl-D-erythritol 2-phosphate site.

Belongs to the IspF family. As to quaternary structure, homotrimer. A divalent metal cation is required as a cofactor.

The enzyme catalyses 4-CDP-2-C-methyl-D-erythritol 2-phosphate = 2-C-methyl-D-erythritol 2,4-cyclic diphosphate + CMP. It functions in the pathway isoprenoid biosynthesis; isopentenyl diphosphate biosynthesis via DXP pathway; isopentenyl diphosphate from 1-deoxy-D-xylulose 5-phosphate: step 4/6. In terms of biological role, involved in the biosynthesis of isopentenyl diphosphate (IPP) and dimethylallyl diphosphate (DMAPP), two major building blocks of isoprenoid compounds. Catalyzes the conversion of 4-diphosphocytidyl-2-C-methyl-D-erythritol 2-phosphate (CDP-ME2P) to 2-C-methyl-D-erythritol 2,4-cyclodiphosphate (ME-CPP) with a corresponding release of cytidine 5-monophosphate (CMP). The chain is 2-C-methyl-D-erythritol 2,4-cyclodiphosphate synthase from Sodalis glossinidius (strain morsitans).